Here is a 371-residue protein sequence, read N- to C-terminus: Histidinol-phosphate aminotransferase (371 aa).

The residue at position 228 (lysine 228) is an N6-(pyridoxal phosphate)lysine.

This sequence belongs to the class-II pyridoxal-phosphate-dependent aminotransferase family. Histidinol-phosphate aminotransferase subfamily. It depends on pyridoxal 5'-phosphate as a cofactor.

It carries out the reaction L-histidinol phosphate + 2-oxoglutarate = 3-(imidazol-4-yl)-2-oxopropyl phosphate + L-glutamate. It functions in the pathway amino-acid biosynthesis; L-histidine biosynthesis; L-histidine from 5-phospho-alpha-D-ribose 1-diphosphate: step 7/9. The chain is Histidinol-phosphate aminotransferase from Methanococcus maripaludis (strain C5 / ATCC BAA-1333).